Reading from the N-terminus, the 262-residue chain is Abhydrolase domain-containing protein AKT2 (262 aa).

The Peroxisomal targeting signal type 1 motif lies at 260 to 262; that stretch reads SKL.

The protein belongs to the AB hydrolase superfamily. AKT2 hydrolase family.

It is found in the peroxisome. It functions in the pathway mycotoxin biosynthesis. Functionally, abhydrolase domain-containing protein; part of the gene clusters that mediate the biosynthesis of the host-selective toxins (HSTs) AK-toxins responsible for Japanese pear black spot disease by the Japanese pear pathotype. AK-toxins are esters of 9,10-epoxy 8-hydroxy 9-methyldecatrienoic acid (EDA). On cellular level, AK-toxins affect plasma membrane of susceptible cells and cause a sudden increase in loss of K(+) after a few minutes of toxin treatment. The acyl-CoA ligase AKT1, the hydrolase AKT2 and enoyl-CoA hydratase AKT3 are all involved in the biosynthesis of the AK-, AF- and ACT-toxin common 9,10-epoxy-8-hydroxy-9-methyl-decatrienoic acid (EDA) structural moiety. Part of the EDA biosynthesis occurs in the peroxisome since these 3 enzymes are localized in peroxisomes. The exact roles of the 3 enzymes, as well as of additional AK-toxin clusters enzymes, including AKT4, AKT6 and AKTS1, have still to be elucidated. The Cytochrome P450 monooxygenase AKT7 on the other side functions to limit production of EDA and AK-toxin, probably via the catalysis of a side reaction of EDA or its precursor. This Alternaria alternata (Alternaria rot fungus) protein is Abhydrolase domain-containing protein AKT2.